Consider the following 337-residue polypeptide: Glyceraldehyde-3-phosphate dehydrogenase 2 (337 aa).

NADP(+)-binding positions include 11–12 (RI), Asp-35, Arg-80, and Thr-122. D-glyceraldehyde 3-phosphate-binding positions include 153–155 (SCT), Thr-184, Arg-199, 212–213 (TG), and Arg-235. The active-site Nucleophile is the Cys-154. Asn-317 is a binding site for NADP(+).

It belongs to the glyceraldehyde-3-phosphate dehydrogenase family. Homotetramer.

It is found in the cytoplasm. It carries out the reaction D-glyceraldehyde 3-phosphate + phosphate + NADP(+) = (2R)-3-phospho-glyceroyl phosphate + NADPH + H(+). The catalysed reaction is D-glyceraldehyde 3-phosphate + phosphate + NAD(+) = (2R)-3-phospho-glyceroyl phosphate + NADH + H(+). It participates in carbohydrate biosynthesis; Calvin cycle. In terms of biological role, gap2 has a major role in carbon fixation as a component of the Calvin cycle. Catalyzes the oxidative phosphorylation of glyceraldehyde 3-phosphate (G3P) to 1,3-bisphosphoglycerate (BPG) using the cofactor NAD. The first reaction step involves the formation of a hemiacetal intermediate between G3P and a cysteine residue, and this hemiacetal intermediate is then oxidized to a thioester, with concomitant reduction of NAD to NADH. The reduced NADH is then exchanged with the second NAD, and the thioester is attacked by a nucleophilic inorganic phosphate to produce BPG. This is Glyceraldehyde-3-phosphate dehydrogenase 2 (gap2) from Trichormus variabilis (strain ATCC 29413 / PCC 7937) (Anabaena variabilis).